Reading from the N-terminus, the 555-residue chain is Potassium-transporting ATPase potassium-binding subunit (555 aa).

10 helical membrane-spanning segments follow: residues 2–22, 60–80, 130–150, 173–193, 246–266, 278–298, 374–394, 412–432, 483–503, and 525–545; these read IWVA…PTGI, QYAL…YFIF, IGIT…VMAF, VFLP…VPQT, MSNI…PFTY, ILFV…TTSE, AGFV…GLMV, LIAV…ALAL, LVMF…AASL, and GIFI…MLVL.

The protein belongs to the KdpA family. In terms of assembly, the system is composed of three essential subunits: KdpA, KdpB and KdpC.

The protein localises to the cell membrane. Functionally, part of the high-affinity ATP-driven potassium transport (or Kdp) system, which catalyzes the hydrolysis of ATP coupled with the electrogenic transport of potassium into the cytoplasm. This subunit binds the extracellular potassium ions and delivers the ions to the membrane domain of KdpB through an intramembrane tunnel. The sequence is that of Potassium-transporting ATPase potassium-binding subunit from Bacillus cereus (strain 03BB102).